Consider the following 47-residue polypeptide: Large ribosomal subunit protein bL34 (47 aa).

This sequence belongs to the bacterial ribosomal protein bL34 family.

The protein is Large ribosomal subunit protein bL34 of Corynebacterium jeikeium (strain K411).